A 187-amino-acid polypeptide reads, in one-letter code: Elongation factor P (187 aa).

This sequence belongs to the elongation factor P family.

The protein resides in the cytoplasm. The protein operates within protein biosynthesis; polypeptide chain elongation. In terms of biological role, involved in peptide bond synthesis. Stimulates efficient translation and peptide-bond synthesis on native or reconstituted 70S ribosomes in vitro. Probably functions indirectly by altering the affinity of the ribosome for aminoacyl-tRNA, thus increasing their reactivity as acceptors for peptidyl transferase. The chain is Elongation factor P from Corynebacterium glutamicum (strain R).